We begin with the raw amino-acid sequence, 253 residues long: Chitooligosaccharide deacetylase (253 aa).

Mg(2+)-binding residues include His61 and His126.

It belongs to the YdjC deacetylase family. ChbG subfamily. Homodimer. It depends on Mg(2+) as a cofactor.

It localises to the cytoplasm. It catalyses the reaction N,N'-diacetylchitobiose + H2O = N-acetyl-beta-D-glucosaminyl-(1-&gt;4)-D-glucosamine + acetate. The enzyme catalyses diacetylchitobiose-6'-phosphate + H2O = N'-monoacetylchitobiose-6'-phosphate + acetate. The protein operates within glycan degradation; chitin degradation. Functionally, involved in the degradation of chitin. ChbG is essential for growth on the acetylated chitooligosaccharides chitobiose and chitotriose but is dispensable for growth on cellobiose and chitosan dimer, the deacetylated form of chitobiose. Deacetylation of chitobiose-6-P and chitotriose-6-P is necessary for both the activation of the chb promoter by the regulatory protein ChbR and the hydrolysis of phosphorylated beta-glucosides by the phospho-beta-glucosidase ChbF. Catalyzes the removal of only one acetyl group from chitobiose-6-P to yield monoacetylchitobiose-6-P, the inducer of ChbR and the substrate of ChbF. The polypeptide is Chitooligosaccharide deacetylase (Yersinia enterocolitica serotype O:8 / biotype 1B (strain NCTC 13174 / 8081)).